We begin with the raw amino-acid sequence, 35 residues long: Conotoxin Cal6.1d (35 aa).

A propeptide spanning residues G1 to R8 is cleaved from the precursor. 3 cysteine pairs are disulfide-bonded: C9–C25, C16–C29, and C24–C34.

The protein belongs to the conotoxin O1 superfamily. As to expression, expressed by the venom duct.

The protein localises to the secreted. Its function is as follows. Probable neurotoxin with unknown target. Possibly targets ion channels. The sequence is that of Conotoxin Cal6.1d from Californiconus californicus (California cone).